The sequence spans 232 residues: Eukaryotic translation initiation factor NCBP (232 aa).

Basic and acidic residues predominate over residues 1-11 (MEPAVERKVPE). The interval 1-49 (MEPAVERKVPEQEEQLQPSHARAEDAPPAAVEEEDEAEAEESERRNREL) is disordered. Residues 31-41 (VEEEDEAEAEE) are compositionally biased toward acidic residues.

The protein belongs to the eukaryotic initiation factor 4E family. EIF4F is a multi-subunit complex, the composition of which varies with external and internal environmental conditions. It is composed of at least EIF4A, EIF4E and EIF4G. EIF4E is also known to interact with other partners. In higher plants two isoforms of EIF4F have been identified, named isoform EIF4F and isoform EIF(iso)4F. Isoform EIF4F has subunits p220 and p26, whereas isoform EIF(iso)4F has subunits p82 and p28.

Functionally, recognizes and binds the 7-methylguanosine-containing mRNA cap during an early step in the initiation of protein synthesis and facilitates ribosome binding by inducing the unwinding of the mRNAs secondary structures. In Triticum aestivum (Wheat), this protein is Eukaryotic translation initiation factor NCBP (NCBP).